Here is a 459-residue protein sequence, read N- to C-terminus: UDP-N-acetylmuramate--L-alanine ligase (459 aa).

113–119 (GSHGKTS) contacts ATP.

Belongs to the MurCDEF family.

Its subcellular location is the cytoplasm. The catalysed reaction is UDP-N-acetyl-alpha-D-muramate + L-alanine + ATP = UDP-N-acetyl-alpha-D-muramoyl-L-alanine + ADP + phosphate + H(+). It functions in the pathway cell wall biogenesis; peptidoglycan biosynthesis. Its function is as follows. Cell wall formation. The protein is UDP-N-acetylmuramate--L-alanine ligase of Desulfotalea psychrophila (strain LSv54 / DSM 12343).